Reading from the N-terminus, the 96-residue chain is ATP synthase subunit e, mitochondrial (96 aa).

Ser2 bears the N-acetylserine mark.

Belongs to the ATPase e subunit family. As to quaternary structure, F-type ATPases have 2 components, CF(1) - the catalytic core - and CF(0) - the membrane proton channel. In yeast, the dimeric form of ATP synthase consists of 17 polypeptides: alpha, beta, gamma, delta, epsilon, 4 (B), 5 (OSCP), 6 (A), 8, 9 (C), d, E (Tim11), f, g, h, i/j and k.

The protein resides in the mitochondrion. The protein localises to the mitochondrion inner membrane. Mitochondrial membrane ATP synthase (F(1)F(0) ATP synthase or Complex V) produces ATP from ADP in the presence of a proton gradient across the membrane which is generated by electron transport complexes of the respiratory chain. F-type ATPases consist of two structural domains, F(1) - containing the extramembraneous catalytic core, and F(0) - containing the membrane proton channel, linked together by a central stalk and a peripheral stalk. During catalysis, ATP synthesis in the catalytic domain of F(1) is coupled via a rotary mechanism of the central stalk subunits to proton translocation. Part of the complex F(0) domain. Minor subunit located with subunit a in the membrane. This is ATP synthase subunit e, mitochondrial (TIM11) from Saccharomyces cerevisiae (strain ATCC 204508 / S288c) (Baker's yeast).